We begin with the raw amino-acid sequence, 416 residues long: Cyclin-L1-1 (416 aa).

The interval 286–416 is disordered; sequence KCTAGSANND…DSSKDRRRHH (131 aa). 4 stretches are compositionally biased toward basic and acidic residues: residues 304 to 315, 328 to 374, 384 to 393, and 401 to 410; these read PHEKATDSKKSG, SYER…DKLK, RLKDSGGHSD, and RDRDYRDSSK.

Belongs to the cyclin family. Cyclin L subfamily. Forms a complex with CDKG1. Interacts with MOS4 and associates with the spliceosome.

It localises to the nucleus. Cognate cyclin for CDKG1. Required for synapsis and male meiosis, and for the proper splicing of specific resistance (R) genes. Involved in regulation of DNA methylation and transcriptional silencing. In Arabidopsis thaliana (Mouse-ear cress), this protein is Cyclin-L1-1 (CYCL1-1).